A 490-amino-acid polypeptide reads, in one-letter code: Protein U94 (490 aa).

The 210-residue stretch at 1 to 210 (MFSIINPSDD…SHFNKKPNVK (210 aa)) folds into the PV NS1-Nuc domain.

The protein localises to the host nucleus. The chain is Protein U94 (U94) from Human herpesvirus 6A (strain Uganda-1102) (HHV-6 variant A).